The following is a 447-amino-acid chain: Cytochrome P450 BJ-4 homolog (447 aa).

Position 392 (Cys-392) interacts with heme.

It belongs to the cytochrome P450 family. Requires heme as cofactor.

Functionally, cytochromes P450 are a group of heme-thiolate monooxygenases. They oxidize a variety of structurally unrelated compounds, including steroids, fatty acids, and xenobiotics. This Sinorhizobium fredii (strain NBRC 101917 / NGR234) protein is Cytochrome P450 BJ-4 homolog (cyp117A2).